We begin with the raw amino-acid sequence, 474 residues long: 15-cis-phytoene desaturase (474 aa).

This sequence belongs to the carotenoid/retinoid oxidoreductase family.

It is found in the cell membrane. It carries out the reaction 2 a plastoquinone + 15-cis-phytoene = 9,9',15-tri-cis-zeta-carotene + 2 a plastoquinol. It functions in the pathway carotenoid biosynthesis; lycopene biosynthesis. Inhibited by the herbicide norflurazon in a non-competitive way. Functionally, this enzyme converts phytoene into zeta-carotene via the intermediary of phytofluene by the symmetrical introduction of two double bonds at the C-11 and C-11' positions of phytoene. Also active with phytofluene and 1,2-epoxyphytoene as substrates. In Synechococcus elongatus (strain ATCC 33912 / PCC 7942 / FACHB-805) (Anacystis nidulans R2), this protein is 15-cis-phytoene desaturase (pds).